Reading from the N-terminus, the 446-residue chain is Branched-chain amino acid permease BrnQ (446 aa).

Helical transmembrane passes span 13-33, 41-61, 81-101, 120-140, 154-174, 196-216, 237-257, 285-305, 325-345, 347-367, 381-401, and 421-441; these read ISSMLFGLFFGAGNLIFPAYL, LWISLLGFLITGVGLPLLAIA, KYSYFFTCLLYLTIGPFFAIP, MAKSTGLFIFSLIFFAIMLFF, FLTPAFLLFFFFIMIMALLHP, VLAGYNTMDALAGLAFGIIVI, TGVLTCLLMAVIYAITALVGA, GAVIFALMIFVACLKTAIGLI, WAIIFSLLAFGIANVGLTTII, FSLPVLMLLYPLAISLILLAL, IMTAVTFLCALGDFFKALPAG, and GLGWLVPVTVIFAILAIKGVI.

It belongs to the branched chain amino acid transporter family.

It is found in the cell membrane. Its activity is regulated as follows. Leucine uptake is inhibited by the proton ionophore carbonyl cyanide m-chlorophenylhydrazone (CCCP). In terms of biological role, branched chain amino acid transport system which is involved in the uptake of leucine, valine and isoleucine. The proton motive force is probably the driving force for transport. In Lactobacillus delbrueckii subsp. lactis, this protein is Branched-chain amino acid permease BrnQ.